Here is a 392-residue protein sequence, read N- to C-terminus: Protein NolC (392 aa).

Positions 2 to 71 (KRDLYETLGV…RAAYDRYGHA (70 aa)) constitute a J domain. Disordered stretches follow at residues 103–142 (RRDD…QDGA) and 157–244 (LGRE…TGLR). Positions 157 to 170 (LGREAGHQPEDLRH) are enriched in basic and acidic residues. Over residues 171 to 185 (LPGLRPYPRRPGLLL) the composition is skewed to low complexity. Over residues 186-203 (DRTHLPDLRRSRSDDHRS) the composition is skewed to basic and acidic residues. Residues 227-241 (HRGRHAYPPLRRGRT) show a composition bias toward basic residues.

The sequence is that of Protein NolC (nolC) from Rhizobium fredii (Sinorhizobium fredii).